A 44-amino-acid polypeptide reads, in one-letter code: Cytochrome b559 subunit beta (44 aa).

A helical membrane pass occupies residues 19-35 (WLAIHGIAIPTVFFLGA). A heme-binding site is contributed by His23.

It belongs to the PsbE/PsbF family. As to quaternary structure, heterodimer of an alpha subunit and a beta subunit. PSII is composed of 1 copy each of membrane proteins PsbA, PsbB, PsbC, PsbD, PsbE, PsbF, PsbH, PsbI, PsbJ, PsbK, PsbL, PsbM, PsbT, PsbX, PsbY, PsbZ, Psb30/Ycf12, at least 3 peripheral proteins of the oxygen-evolving complex and a large number of cofactors. It forms dimeric complexes. The cofactor is heme b.

It is found in the plastid. The protein resides in the chloroplast thylakoid membrane. Its function is as follows. This b-type cytochrome is tightly associated with the reaction center of photosystem II (PSII). PSII is a light-driven water:plastoquinone oxidoreductase that uses light energy to abstract electrons from H(2)O, generating O(2) and a proton gradient subsequently used for ATP formation. It consists of a core antenna complex that captures photons, and an electron transfer chain that converts photonic excitation into a charge separation. The chain is Cytochrome b559 subunit beta from Gracilaria tenuistipitata var. liui (Red alga).